The primary structure comprises 413 residues: Elongation factor 1-alpha (413 aa).

GTP-binding positions include 1-7, 77-81, and 139-142; these read HVDSGKS, DAPGH, and NKMD. Positions 1–228 constitute a tr-type G domain; that stretch reads HVDSGKSTTT…DAILPPARPT (228 aa). A 5-glutamyl glycerylphosphorylethanolamine mark is found at Glu287 and Glu360.

Belongs to the TRAFAC class translation factor GTPase superfamily. Classic translation factor GTPase family. EF-Tu/EF-1A subfamily.

The protein resides in the cytoplasm. Functionally, this protein promotes the GTP-dependent binding of aminoacyl-tRNA to the A-site of ribosomes during protein biosynthesis. This chain is Elongation factor 1-alpha, found in Heliocheilus albipunctella (Millet head miner).